An 835-amino-acid polypeptide reads, in one-letter code: Microcephalin (835 aa).

One can recognise a BRCT 1 domain in the interval 1 to 93 (MAAPILKDVV…AHIDESLFPA (93 aa)). Phosphoserine is present on residues Ser-279, Ser-287, Ser-296, and Ser-333. Disordered stretches follow at residues 332–376 (LSPT…RKRS) and 417–442 (SPDNLKERNSENLPPESQLPSSPAQF). The residue at position 335 (Thr-335) is a Phosphothreonine. Positions 343 to 361 (LLIHSRPRSSSVKRKRVSH) are enriched in basic residues. Ser-548 carries the phosphoserine modification. The interval 555 to 583 (AVDLKSTQNKGTTSKISNSSEGEAQSEHE) is disordered. The segment covering 559-577 (KSTQNKGTTSKISNSSEGE) has biased composition (polar residues). 2 consecutive BRCT domains span residues 640–730 (SGRG…PFEL) and 751–833 (YRGT…NYLL).

As to quaternary structure, interacts with CDC27 and maybe other components of the APC/C complex. Interacts with histone variant H2AX under DNA damage conditions.

It localises to the cytoplasm. The protein localises to the cytoskeleton. Its subcellular location is the microtubule organizing center. It is found in the centrosome. Functionally, implicated in chromosome condensation and DNA damage induced cellular responses. May play a role in neurogenesis and regulation of the size of the cerebral cortex. This Pan troglodytes (Chimpanzee) protein is Microcephalin.